Consider the following 451-residue polypeptide: Putative metabolite transport protein YyaJ (451 aa).

Topologically, residues M1–H29 are cytoplasmic. Residues F30–L50 traverse the membrane as a helical segment. Residues S51–H60 lie on the Extracellular side of the membrane. Residues W61 to L81 form a helical membrane-spanning segment. Over G82–K97 the chain is Cytoplasmic. Residues A98 to D118 form a helical membrane-spanning segment. Over I119–T124 the chain is Extracellular. A helical transmembrane segment spans residues F125–A145. The Cytoplasmic segment spans residues E146–I157. Residues S158–V178 form a helical membrane-spanning segment. Residues I179–G182 lie on the Extracellular side of the membrane. A helical transmembrane segment spans residues S183–I203. The Cytoplasmic segment spans residues H204–T270. Residues I271–V291 traverse the membrane as a helical segment. Residues P292 to T305 are Extracellular-facing. Residues L306–I326 traverse the membrane as a helical segment. At S327 to K333 the chain is on the cytoplasmic side. Residues W334–F354 form a helical membrane-spanning segment. At I355–I357 the chain is on the extracellular side. A helical transmembrane segment spans residues M358–Y378. Topologically, residues A379–L396 are cytoplasmic. The helical transmembrane segment at A397–V417 threads the bilayer. Over Q418–Y421 the chain is Extracellular. Residues I422–F442 form a helical membrane-spanning segment. At G443–I451 the chain is on the cytoplasmic side.

Belongs to the major facilitator superfamily. Sugar transporter (TC 2.A.1.1) family.

Its subcellular location is the cell membrane. This chain is Putative metabolite transport protein YyaJ (yyaJ), found in Bacillus subtilis (strain 168).